The primary structure comprises 268 residues: LOB domain-containing protein 22 (268 aa).

Residues 1-31 (MPSGKPSSVFPLHPKPTPLKPSSSTSSSNNN) are disordered. Positions 22–31 (SSSTSSSNNN) are enriched in low complexity. In terms of domain architecture, LOB spans 35–136 (QACAACKYQR…NELEIVLQQL (102 aa)).

It belongs to the LOB domain-containing protein family.

The sequence is that of LOB domain-containing protein 22 (LBD22) from Arabidopsis thaliana (Mouse-ear cress).